The primary structure comprises 176 residues: Large ribosomal subunit protein uL10 (176 aa).

Belongs to the universal ribosomal protein uL10 family. In terms of assembly, part of the ribosomal stalk of the 50S ribosomal subunit. The N-terminus interacts with L11 and the large rRNA to form the base of the stalk. The C-terminus forms an elongated spine to which L12 dimers bind in a sequential fashion forming a multimeric L10(L12)X complex.

Forms part of the ribosomal stalk, playing a central role in the interaction of the ribosome with GTP-bound translation factors. This chain is Large ribosomal subunit protein uL10, found in Streptomyces avermitilis (strain ATCC 31267 / DSM 46492 / JCM 5070 / NBRC 14893 / NCIMB 12804 / NRRL 8165 / MA-4680).